The primary structure comprises 79 residues: Acyl carrier protein (79 aa).

One can recognise a Carrier domain in the interval 3 to 78 (QEILEKVRSI…DAVSYIQEKK (76 aa)). An O-(pantetheine 4'-phosphoryl)serine modification is found at Ser-38.

The protein belongs to the acyl carrier protein (ACP) family. 4'-phosphopantetheine is transferred from CoA to a specific serine of apo-ACP by AcpS. This modification is essential for activity because fatty acids are bound in thioester linkage to the sulfhydryl of the prosthetic group.

It localises to the cytoplasm. It functions in the pathway lipid metabolism; fatty acid biosynthesis. Functionally, carrier of the growing fatty acid chain in fatty acid biosynthesis. The polypeptide is Acyl carrier protein (Synechococcus sp. (strain RCC307)).